A 206-amino-acid chain; its full sequence is FMN-dependent NADH:quinone oxidoreductase (206 aa).

FMN contacts are provided by residues S10 and 15-17 (SVS).

This sequence belongs to the azoreductase type 1 family. Homodimer. It depends on FMN as a cofactor.

The enzyme catalyses 2 a quinone + NADH + H(+) = 2 a 1,4-benzosemiquinone + NAD(+). The catalysed reaction is N,N-dimethyl-1,4-phenylenediamine + anthranilate + 2 NAD(+) = 2-(4-dimethylaminophenyl)diazenylbenzoate + 2 NADH + 2 H(+). Functionally, quinone reductase that provides resistance to thiol-specific stress caused by electrophilic quinones. Also exhibits azoreductase activity. Catalyzes the reductive cleavage of the azo bond in aromatic azo compounds to the corresponding amines. The chain is FMN-dependent NADH:quinone oxidoreductase from Acidobacterium capsulatum (strain ATCC 51196 / DSM 11244 / BCRC 80197 / JCM 7670 / NBRC 15755 / NCIMB 13165 / 161).